The chain runs to 346 residues: Membrane progestin receptor alpha (346 aa).

Over 1–72 (MAMAQKLSHL…RTLFQQHNEA (72 aa)) the chain is Cytoplasmic. The helical transmembrane segment at 73 to 93 (VNVWTHLLAALVLLLRLALFV) threads the bilayer. Residues 94–103 (ETVDFWGDPH) are Extracellular-facing. Residues 104 to 124 (ALPLFIIVLASFTYLSFSALA) form a helical membrane-spanning segment. Over 125–137 (HLLQAKSEFWHYS) the chain is Cytoplasmic. Residues 138–158 (FFFLDYVGVAVYQFGSALAHF) traverse the membrane as a helical segment. The Extracellular portion of the chain corresponds to 159–169 (YYAIEPAWHAQ). Residues 170–190 (VQAVFLPMAAFLAWLSCIGSC) traverse the membrane as a helical segment. The Cytoplasmic segment spans residues 191-237 (YNKYIQKPGLLGRTCQEVPSVLAYALDISPVVHRIFVSSDPTTDDPA). The helical transmembrane segment at 238-258 (LLYHKCQVVFFLLAAAFFSTF) threads the bilayer. Topologically, residues 259-276 (MPERWFPGSCHVFGQGHQ) are extracellular. Residues 277 to 297 (LFHIFLVLCTLAQLEAVALDY) form a helical membrane-spanning segment. The Cytoplasmic segment spans residues 298-316 (EARRPIYEPLHTHWPHNFS). A helical transmembrane segment spans residues 317–337 (GLFLLTVGSSILTAFLLSQLV). Topologically, residues 338 to 346 (QRKLDQKTK) are extracellular.

This sequence belongs to the ADIPOR family. Expressed in a wide range of tissues including ovary, testis, placenta, uterus and bladder.

Its subcellular location is the cell membrane. Functionally, plasma membrane progesterone (P4) receptor coupled to G proteins. Seems to act through a G(i) mediated pathway. May be involved in oocyte maturation. Involved in neurosteroid inhibition of apoptosis. Also binds dehydroepiandrosterone (DHEA), pregnanolone, pregnenolone and allopregnanolone. The polypeptide is Membrane progestin receptor alpha (Homo sapiens (Human)).